We begin with the raw amino-acid sequence, 34 residues long: MSDIN-like toxin proprotein 5 (34 aa).

A propeptide spanning residues 1 to 10 (MSDINTARLP) is cleaved from the precursor. A cross-link (cyclopeptide (Tyr-Pro)) is located at residues 11 to 20 (YVVFMSFIPP). A propeptide spanning residues 21–34 (CVNDDIQVVLTRGE) is cleaved from the precursor.

It belongs to the MSDIN fungal toxin family. In terms of processing, processed by the macrocyclase-peptidase enzyme POPB to yield a toxic cyclic decapeptide. POPB first removes 10 residues from the N-terminus. Conformational trapping of the remaining peptide forces the enzyme to release this intermediate rather than proceed to macrocyclization. The enzyme rebinds the remaining peptide in a different conformation and catalyzes macrocyclization of the N-terminal 10 residues.

In terms of biological role, probable toxin that belongs to the MSDIN-like toxin family responsible for a large number of food poisoning cases and deaths. This Amanita bisporigera (Destroying angel) protein is MSDIN-like toxin proprotein 5.